Here is a 771-residue protein sequence, read N- to C-terminus: Choline transporter-like protein 1 (771 aa).

The chain crosses the membrane as a helical span at residues 96–116; that stretch reads FLFFVFLCGWVVVAGFGIMWG. Residues N141 and N259 are each glycosylated (N-linked (GlcNAc...) asparagine). Transmembrane regions (helical) follow at residues 312–332, 335–355, 392–412, and 441–461; these read WWQT…WTVI, LLGS…LGFG, LVVA…ILFI, and LFPF…AIWL. A glycan (N-linked (GlcNAc...) asparagine) is linked at N480. Transmembrane regions (helical) follow at residues 514 to 534, 566 to 586, 603 to 623, 662 to 682, and 701 to 721; these read LFAF…ALAG, LGSI…RVLL, WFLM…KFLT, AGIL…ILSF, and YYFV…DLFF.

Belongs to the CTL (choline transporter-like) family.

Its subcellular location is the membrane. This is Choline transporter-like protein 1 (chtl-1) from Caenorhabditis elegans.